The sequence spans 336 residues: Glyceraldehyde-3-phosphate dehydrogenase (336 aa).

Residues 12–13, Asp-35, Arg-79, and Ser-121 each bind NAD(+); that span reads RI. Residues 152-154 and Thr-183 contribute to the D-glyceraldehyde 3-phosphate site; that span reads SCT. Cys-153 (nucleophile) is an active-site residue. Asn-184 provides a ligand contact to NAD(+). Residues Arg-198, 211–212, and Arg-234 each bind D-glyceraldehyde 3-phosphate; that span reads TG. Position 317 (Asn-317) interacts with NAD(+).

This sequence belongs to the glyceraldehyde-3-phosphate dehydrogenase family. As to quaternary structure, homotetramer.

It localises to the cytoplasm. It catalyses the reaction D-glyceraldehyde 3-phosphate + phosphate + NAD(+) = (2R)-3-phospho-glyceroyl phosphate + NADH + H(+). Its pathway is carbohydrate degradation; glycolysis; pyruvate from D-glyceraldehyde 3-phosphate: step 1/5. With respect to regulation, resistant to pentalenolactone. Functionally, catalyzes the oxidative phosphorylation of glyceraldehyde 3-phosphate (G3P) to 1,3-bisphosphoglycerate (BPG) using the cofactor NAD. The first reaction step involves the formation of a hemiacetal intermediate between G3P and a cysteine residue, and this hemiacetal intermediate is then oxidized to a thioester, with concomitant reduction of NAD to NADH. The reduced NADH is then exchanged with the second NAD, and the thioester is attacked by a nucleophilic inorganic phosphate to produce BPG. The chain is Glyceraldehyde-3-phosphate dehydrogenase (gap) from Streptomyces coelicolor (strain ATCC BAA-471 / A3(2) / M145).